Reading from the N-terminus, the 760-residue chain is Exostosin-1 (760 aa).

Residues 1-6 (MQAKKR) are Cytoplasmic-facing. Residues 7–25 (YILVFVSCAFLAYAYFGGY) form a helical; Signal-anchor for type II membrane protein membrane-spanning segment. Topologically, residues 26–760 (RLKVSPLRPR…KYRQIELVGS (735 aa)) are lumenal. Residues Asn-71 and Asn-327 are each glycosylated (N-linked (GlcNAc...) asparagine). Arg-437 is a binding site for UDP-N-acetyl-alpha-D-glucosamine. N-linked (GlcNAc...) asparagine glycosylation occurs at Asn-476. Positions 540–560 (LGGSTRSQGAGPTSQTTEGRP) are disordered. Residues 541 to 560 (GGSTRSQGAGPTSQTTEGRP) are compositionally biased toward polar residues. Residues Arg-565, Asp-581, Glu-582, Asp-583, Glu-669, Asp-670, and Arg-713 each coordinate UDP-N-acetyl-alpha-D-glucosamine. Mn(2+) is bound at residue Asp-583. Cys-668 and Cys-716 are oxidised to a cystine. Asp-670 is a catalytic residue.

Belongs to the glycosyltransferase 47 family. As to quaternary structure, interacts with sau. Mn(2+) is required as a cofactor. As to expression, ubiquitously expressed in early embryos. Later (in stage 10 embryos), it is expressed at higher level in the nervous system. Ubiquitously expressed in wing imaginal disk.

It is found in the endoplasmic reticulum membrane. Its subcellular location is the golgi apparatus membrane. It carries out the reaction 3-O-{[(1-&gt;4)-beta-D-GlcA-(1-&gt;4)-alpha-D-GlcNAc](n)-(1-&gt;4)-beta-D-GlcA-(1-&gt;3)-beta-D-Gal-(1-&gt;3)-beta-D-Gal-(1-&gt;4)-beta-D-Xyl}-L-seryl-[protein] + UDP-N-acetyl-alpha-D-glucosamine = 3-O-{alpha-D-GlcNAc-[(1-&gt;4)-beta-D-GlcA-(1-&gt;4)-alpha-D-GlcNAc](n)-(1-&gt;4)-beta-D-GlcA-(1-&gt;3)-beta-D-Gal-(1-&gt;3)-beta-D-Gal-(1-&gt;4)-beta-D-Xyl}-L-seryl-[protein] + UDP + H(+). It catalyses the reaction 3-O-{alpha-D-GlcNAc-[(1-&gt;4)-beta-D-GlcA-(1-&gt;4)-alpha-D-GlcNAc](n)-(1-&gt;4)-beta-D-GlcA-(1-&gt;3)-beta-D-Gal-(1-&gt;3)-beta-D-Gal-(1-&gt;4)-beta-D-Xyl}-L-seryl-[protein] + UDP-alpha-D-glucuronate = 3-O-{[(1-&gt;4)-beta-D-GlcA-(1-&gt;4)-alpha-D-GlcNAc](n+1)-(1-&gt;4)-beta-D-GlcA-(1-&gt;3)-beta-D-Gal-(1-&gt;3)-beta-D-Gal-(1-&gt;4)-beta-D-Xyl}-L-seryl-[protein] + UDP + H(+). It participates in protein modification; protein glycosylation. The protein operates within glycan metabolism; heparan sulfate biosynthesis. It functions in the pathway glycan metabolism; heparin biosynthesis. Its function is as follows. Glycosyltransferase required for the biosynthesis of heparan-sulfate and responsible for the alternating addition of beta-1-4-linked glucuronic acid (GlcA) and alpha-1-4-linked N-acetylglucosamine (GlcNAc) units to nascent heparan sulfate chains. Botv is the trigger of heparan sulfate chain initiation and polymerization takes place by a complex of ttv and sotv. Plays a central role in the diffusion of morphogens hedgehog (hh), wingless (wg) and decapentaplegic (dpp) via its role in heparan sulfate proteoglycans (HSPGs) biosynthesis which are required for movement of hh, dpp and wg morphogens. The sequence is that of Exostosin-1 (ttv) from Drosophila melanogaster (Fruit fly).